The following is a 167-amino-acid chain: ATP synthase subunit b (167 aa).

Residues 15 to 37 (FWQTVIFLVTLYLLSKFAWGPIM) traverse the membrane as a helical segment.

Belongs to the ATPase B chain family. In terms of assembly, F-type ATPases have 2 components, F(1) - the catalytic core - and F(0) - the membrane proton channel. F(1) has five subunits: alpha(3), beta(3), gamma(1), delta(1), epsilon(1). F(0) has three main subunits: a(1), b(2) and c(10-14). The alpha and beta chains form an alternating ring which encloses part of the gamma chain. F(1) is attached to F(0) by a central stalk formed by the gamma and epsilon chains, while a peripheral stalk is formed by the delta and b chains.

It localises to the cell inner membrane. Functionally, f(1)F(0) ATP synthase produces ATP from ADP in the presence of a proton or sodium gradient. F-type ATPases consist of two structural domains, F(1) containing the extramembraneous catalytic core and F(0) containing the membrane proton channel, linked together by a central stalk and a peripheral stalk. During catalysis, ATP synthesis in the catalytic domain of F(1) is coupled via a rotary mechanism of the central stalk subunits to proton translocation. Its function is as follows. Component of the F(0) channel, it forms part of the peripheral stalk, linking F(1) to F(0). The chain is ATP synthase subunit b from Cytophaga hutchinsonii (strain ATCC 33406 / DSM 1761 / CIP 103989 / NBRC 15051 / NCIMB 9469 / D465).